Here is a 361-residue protein sequence, read N- to C-terminus: Transcription factor TCP10 (361 aa).

The 59-residue stretch at 29-87 folds into the TCP domain; the sequence is RKDRHSKVFTSKGPRDRRVRLSAHTAIQFYDVQDRLGYDRPSKAVDWLIKKAKTAIDKL. 2 disordered regions span residues 220–259 and 295–317; these read DLTM…QPSM and SWDH…SMFA. Positions 295-304 are enriched in basic and acidic residues; that stretch reads SWDHHQTTSD.

Interacts with AHP1, AHP2 and AHP3. Interacts with SPL. As to expression, mostly detected in lateral organs, such as leaves and flowers. Expressed in cotyledons, particularly in the vascular region, in leaves, roots, stems, buds, flowers and immature siliques.

Its subcellular location is the nucleus. Plays a pivotal role in the control of morphogenesis of shoot organs by negatively regulating the expression of boundary-specific genes such as CUC genes, probably through the induction of miRNA (e.g. miR164). Participates in ovule development. The protein is Transcription factor TCP10 (TCP10) of Arabidopsis thaliana (Mouse-ear cress).